The chain runs to 137 residues: Fibroblast growth factor 2 (137 aa).

N27 contacts heparin. Y73 is subject to Phosphotyrosine; by TEC. K86 participates in a covalent cross-link: Glycyl lysine isopeptide (Lys-Gly) (interchain with G-Cter in SUMO1). A heparin-binding region spans residues 119 to 135 (KRTGQYKLGSKTGPGQK).

The protein belongs to the heparin-binding growth factors family. In terms of assembly, monomer. Homodimer. Interacts with FGFR1, FGFR2, FGFR3 and FGFR4. Affinity between fibroblast growth factors (FGFs) and their receptors is increased by heparan sulfate glycosaminoglycans that function as coreceptors. Interacts with CSPG4, FGFBP1 and TEC. Found in a complex with FGFBP1, FGF1 and FGF2. Interacts with FGFBP3. Interacts with integrin ITGAV:ITGB3; the interaction is required for FGF2 signaling. Interacts with SNORC (via the extracellular domain). Interacts with glypican GPC3. Phosphorylation at Tyr-73 regulates FGF2 unconventional secretion.

Its subcellular location is the secreted. The protein resides in the nucleus. Acts as a ligand for FGFR1, FGFR2, FGFR3 and FGFR4. Also acts as an integrin ligand which is required for FGF2 signaling. Binds to integrin ITGAV:ITGB3. Plays an important role in the regulation of cell survival, cell division, cell differentiation and cell migration. Functions as a potent mitogen in vitro. Can induce angiogenesis. Mediates phosphorylation of ERK1/2 and thereby promotes retinal lens fiber differentiation. The protein is Fibroblast growth factor 2 (FGF2) of Oryctolagus cuniculus (Rabbit).